The primary structure comprises 503 residues: N-fatty-acyl-amino acid synthase/hydrolase PM20D1 (503 aa).

The first 24 residues, 1-24 (MAELLASLPAWAAVLLLFFATVSG), serve as a signal peptide directing secretion. Asparagine 72 is a glycosylation site (N-linked (GlcNAc...) asparagine). Histidine 125 contacts Zn(2+). Residue aspartate 127 is part of the active site. Position 157 (aspartate 157) interacts with Zn(2+). The Proton acceptor role is filled by glutamate 191. Zn(2+)-binding residues include glutamate 192 and aspartate 218. N-linked (GlcNAc...) asparagine glycosylation is present at asparagine 443. Residue histidine 465 participates in Zn(2+) binding.

This sequence belongs to the peptidase M20A family. It depends on Zn(2+) as a cofactor. In addition to being detected in blood (at protein level), PM20D1 is also highly expressed in other tissues including brown adipocytes, liver and kidney. It is also expressed in small intestine, large intestine, heart and pancreas.

The protein resides in the secreted. It carries out the reaction an N-acyl-L-amino acid + H2O = an L-alpha-amino acid + a carboxylate. It catalyses the reaction an N-acyl-aromatic L-alpha-amino acid + H2O = an aromatic L-alpha-amino acid + a carboxylate. The enzyme catalyses N-(5Z,8Z,11Z,14Z)-eicosatetraenoyl-glycine + H2O = (5Z,8Z,11Z,14Z)-eicosatetraenoate + glycine. The catalysed reaction is N-hexadecanoyl-L-phenylalanine + H2O = hexadecanoate + L-phenylalanine. It carries out the reaction N-octadecanoyl-L-phenylalanine + H2O = octadecanoate + L-phenylalanine. It catalyses the reaction N-(4Z,7Z,10Z,13Z,16Z,19Z-docosahexaenoyl)-L-phenylalanine + H2O = (4Z,7Z,10Z,13Z,16Z,19Z)-docosahexaenoate + L-phenylalanine. The enzyme catalyses N-(9Z-octadecenoyl)-L-asparagine + H2O = L-asparagine + (9Z)-octadecenoate. The catalysed reaction is (9Z)-octadecenoate + glycine = N-(9Z-octadecenoyl)glycine + H2O. It carries out the reaction N-(9Z-octadecenoyl)-L-lysine + H2O = L-lysine + (9Z)-octadecenoate. It catalyses the reaction N-(9Z-octadecenoyl)-L-methionine + H2O = (9Z)-octadecenoate + L-methionine. The enzyme catalyses N-(9Z-octadecenoyl)-L-serine + H2O = L-serine + (9Z)-octadecenoate. The catalysed reaction is N-(9Z-octadecenoyl)-L-tryptophan + H2O = L-tryptophan + (9Z)-octadecenoate. It carries out the reaction N-(9Z-octadecenoyl)-L-tyrosine + H2O = L-tyrosine + (9Z)-octadecenoate. It catalyses the reaction N-(9Z-octadecenoyl)-L-glutamine + H2O = L-glutamine + (9Z)-octadecenoate. The enzyme catalyses N-(5Z,8Z,11Z,14Z-eicosatetraenoyl)-L-serine + H2O = (5Z,8Z,11Z,14Z)-eicosatetraenoate + L-serine. The catalysed reaction is (5Z,8Z,11Z,14Z)-eicosatetraenoate + L-phenylalanine = N-(5Z,8Z,11Z,14Z-eicosatetraenoyl)-L-phenylalanine + H2O. It carries out the reaction N-(9Z-octadecenoyl)-L-leucine + H2O = L-leucine + (9Z)-octadecenoate. It catalyses the reaction L-phenylalanine + (9Z)-octadecenoate = N-(9Z-octadecenoyl)-L-phenylalanine + H2O. Its pathway is amino-acid metabolism. It functions in the pathway energy metabolism; electron transfer. It participates in lipid metabolism; fatty acid metabolism. Its activity is regulated as follows. Lipoproteins are powerful coactivators of PM20D1 activity in vitro and NAA biosynthesis in vivo. Functionally, secreted enzyme that regulates the endogenous N-fatty acyl amino acid (NAAs) tissue and circulating levels by functioning as a bidirectional NAA synthase/hydrolase. It condenses free fatty acids and free amino acids to generate NAAs and bidirectionally catalyzes the reverse hydrolysis reaction. Some of these NAAs stimulate oxidative metabolism via mitochondrial uncoupling, increasing energy expenditure in a UPC1-independent manner. Thereby, this secreted protein may indirectly regulate whole body energy expenditure. PM20D1 circulates in tight association with both low- and high-density (LDL and HDL,respectively) lipoprotein particles. This is N-fatty-acyl-amino acid synthase/hydrolase PM20D1 from Mus musculus (Mouse).